Reading from the N-terminus, the 590-residue chain is Arginine--tRNA ligase (590 aa).

Residues 130–140 carry the 'HIGH' region motif; sequence PNIAKEMHVGH.

Belongs to the class-I aminoacyl-tRNA synthetase family. As to quaternary structure, monomer.

It localises to the cytoplasm. The enzyme catalyses tRNA(Arg) + L-arginine + ATP = L-arginyl-tRNA(Arg) + AMP + diphosphate. This is Arginine--tRNA ligase from Synechococcus sp. (strain CC9605).